A 730-amino-acid polypeptide reads, in one-letter code: 1,4-alpha-glucan branching enzyme GlgB (730 aa).

Aspartate 405 acts as the Nucleophile in catalysis. Residue glutamate 458 is the Proton donor of the active site.

This sequence belongs to the glycosyl hydrolase 13 family. GlgB subfamily. As to quaternary structure, monomer.

The enzyme catalyses Transfers a segment of a (1-&gt;4)-alpha-D-glucan chain to a primary hydroxy group in a similar glucan chain.. It functions in the pathway glycan biosynthesis; glycogen biosynthesis. Its function is as follows. Catalyzes the formation of the alpha-1,6-glucosidic linkages in glycogen by scission of a 1,4-alpha-linked oligosaccharide from growing alpha-1,4-glucan chains and the subsequent attachment of the oligosaccharide to the alpha-1,6 position. The chain is 1,4-alpha-glucan branching enzyme GlgB from Haemophilus influenzae (strain PittGG).